The sequence spans 119 residues: Small ribosomal subunit protein uS10 (119 aa).

An N-acetylalanine modification is found at A2. K4 participates in a covalent cross-link: Glycyl lysine isopeptide (Lys-Gly) (interchain with G-Cter in ubiquitin). K8 carries the post-translational modification N6-succinyllysine; alternate. A Glycyl lysine isopeptide (Lys-Gly) (interchain with G-Cter in ubiquitin); alternate cross-link involves residue K8. Position 9 is a phosphothreonine (T9). N6-acetyllysine is present on residues K34 and K75. Phosphoserine is present on S93.

Belongs to the universal ribosomal protein uS10 family. In terms of assembly, component of the 40S small ribosomal subunit. In terms of processing, polyubiquitinated by ZNF598 via 'Lys-63'-linked ubiquitin chains when a ribosome has stalled, initiating the ribosome quality control (RQC) pathway to degrade the potentially detrimental aberrant nascent polypeptide. Deubiquitinated by OTUD3 and USP21, antagonizing ZNF598 activity. Ufmylated by UFL1.

Its subcellular location is the cytoplasm. Its function is as follows. Component of the small ribosomal subunit. The ribosome is a large ribonucleoprotein complex responsible for the synthesis of proteins in the cell. This Pongo abelii (Sumatran orangutan) protein is Small ribosomal subunit protein uS10 (RPS20).